Consider the following 128-residue polypeptide: Large-conductance mechanosensitive channel (128 aa).

At 1–16 the chain is on the cytoplasmic side; the sequence is MNFIKEFREFAMRGNV. Residues 17–45 traverse the membrane as a helical segment; the sequence is VDMAVGVIIGSAFGKIVSSLVSDIFTPVL. The Periplasmic segment spans residues 46-74; it reads GILTGGIDFKDMKFVLAQAQGDVPAVTLN. A helical membrane pass occupies residues 75–94; the sequence is YGLFIQNVIDFIIIAFAIFM. Topologically, residues 95–128 are cytoplasmic; the sequence is MIKVINKVRKPEEKKTAPKAETLLTEIRDLLKNK.

It belongs to the MscL family. In terms of assembly, homopentamer.

It localises to the cell inner membrane. In terms of biological role, channel that opens in response to stretch forces in the membrane lipid bilayer. Forms a nonselective ion channel with a conductance of about 4 nanosiemens. May participate in the regulation of osmotic pressure changes within the cell. This chain is Large-conductance mechanosensitive channel, found in Haemophilus influenzae (strain ATCC 51907 / DSM 11121 / KW20 / Rd).